The primary structure comprises 314 residues: Aspartate carbamoyltransferase catalytic subunit (314 aa).

Carbamoyl phosphate-binding residues include Arg63 and Thr64. Lys91 contributes to the L-aspartate binding site. Carbamoyl phosphate contacts are provided by Arg113, His143, and Gln146. Residues Arg176 and Arg228 each contribute to the L-aspartate site. Residues Ala269 and Pro270 each contribute to the carbamoyl phosphate site.

It belongs to the aspartate/ornithine carbamoyltransferase superfamily. ATCase family. In terms of assembly, heterododecamer (2C3:3R2) of six catalytic PyrB chains organized as two trimers (C3), and six regulatory PyrI chains organized as three dimers (R2).

It carries out the reaction carbamoyl phosphate + L-aspartate = N-carbamoyl-L-aspartate + phosphate + H(+). Its pathway is pyrimidine metabolism; UMP biosynthesis via de novo pathway; (S)-dihydroorotate from bicarbonate: step 2/3. Functionally, catalyzes the condensation of carbamoyl phosphate and aspartate to form carbamoyl aspartate and inorganic phosphate, the committed step in the de novo pyrimidine nucleotide biosynthesis pathway. This is Aspartate carbamoyltransferase catalytic subunit from Cutibacterium acnes (strain DSM 16379 / KPA171202) (Propionibacterium acnes).